A 468-amino-acid chain; its full sequence is ATP synthase subunit beta (468 aa).

155-162 (GGAGVGKT) contributes to the ATP binding site.

Belongs to the ATPase alpha/beta chains family. As to quaternary structure, F-type ATPases have 2 components, CF(1) - the catalytic core - and CF(0) - the membrane proton channel. CF(1) has five subunits: alpha(3), beta(3), gamma(1), delta(1), epsilon(1). CF(0) has three main subunits: a(1), b(2) and c(9-12). The alpha and beta chains form an alternating ring which encloses part of the gamma chain. CF(1) is attached to CF(0) by a central stalk formed by the gamma and epsilon chains, while a peripheral stalk is formed by the delta and b chains.

The protein resides in the cell membrane. It carries out the reaction ATP + H2O + 4 H(+)(in) = ADP + phosphate + 5 H(+)(out). In terms of biological role, produces ATP from ADP in the presence of a proton gradient across the membrane. The catalytic sites are hosted primarily by the beta subunits. This chain is ATP synthase subunit beta, found in Streptococcus pyogenes serotype M5 (strain Manfredo).